The following is a 451-amino-acid chain: Eukaryotic translation initiation factor 3 subunit E (451 aa).

The PCI domain maps to 245–425 (PFFNHEPARD…GTVVMNHPPS (181 aa)).

The protein belongs to the eIF-3 subunit E family. Component of the eukaryotic translation initiation factor 3 (eIF-3) complex.

It localises to the cytoplasm. Component of the eukaryotic translation initiation factor 3 (eIF-3) complex, which is involved in protein synthesis of a specialized repertoire of mRNAs and, together with other initiation factors, stimulates binding of mRNA and methionyl-tRNAi to the 40S ribosome. The eIF-3 complex specifically targets and initiates translation of a subset of mRNAs involved in cell proliferation. In Sclerotinia sclerotiorum (strain ATCC 18683 / 1980 / Ss-1) (White mold), this protein is Eukaryotic translation initiation factor 3 subunit E (int6).